We begin with the raw amino-acid sequence, 282 residues long: tRNA (adenine(57)-N(1)/adenine(58)-N(1))-methyltransferase TrmI (282 aa).

Residues 98–101 (SGAL), D119, D172, and D188 contribute to the S-adenosyl-L-methionine site.

This sequence belongs to the class I-like SAM-binding methyltransferase superfamily. TRM61 family. In terms of assembly, homotetramer composed of a dimer of dimers.

It carries out the reaction adenosine(57)/adenosine(58) in tRNA + 2 S-adenosyl-L-methionine = N(1)-methyladenosine(57)/N(1)-methyladenosine(58) in tRNA + 2 S-adenosyl-L-homocysteine + 2 H(+). In terms of biological role, catalyzes the S-adenosyl-L-methionine-dependent formation of N(1)-methyladenine at position 58 (m1A58) in tRNA. The chain is tRNA (adenine(57)-N(1)/adenine(58)-N(1))-methyltransferase TrmI (trmI) from Methanocaldococcus jannaschii (strain ATCC 43067 / DSM 2661 / JAL-1 / JCM 10045 / NBRC 100440) (Methanococcus jannaschii).